The chain runs to 37 residues: Antifungal protein S (37 aa).

Belongs to the thaumatin family.

Its function is as follows. Has antifungal activity. Inhibits the growth of Trichoderma viridae and Candida albicans. This chain is Antifungal protein S, found in Hordeum vulgare (Barley).